We begin with the raw amino-acid sequence, 635 residues long: MPARSAVVVIAMEPSSSITIASSSSYLSNGSSPCSVSLAPPGAGAVAAQAAPVAAGEGGGGGGGGGGGGSSSVEVVSLNRLSANLERLLLDSDLDCSDADVDVADGGPPVPVHRCILAARSTFFYNLFAARGRGGDGAAGGGGGGGGGGGERTGGRPRYKMEELVPGGRVGRDAFLSLLGYLYTGKLRPAPDDVVSCADPMCPHDSCPPAIRFNVEQMYAAWAFKITELISLFQRRLLNFVDKTLVEDVLPILQVAFHSELTPVLEKCIRRIARSNLDNVSLDKELPPEVAVQIKEIRQKSQPNEGDTVISDPVHEKRVRRIHRALDSDDVELVKLLLNESEITLDDANALHYAAAYCDSKVVSELLDLRLANLNLKNSRGYTALHLAAMRREPAIIMCLLNKGAAVSQLTADGQSAMSICRRLTRMKDYNTKMEQGQESNKDRLCIDILDREMIRKPMAVEDSVTSPLLADDLHMKLLYLENRVAFARLFFPAEAKVAMQIAQADTTPEFGIVPAASTSGKLKEVDLNETPVTQNKRLRSRVDALMKTVELGRRYFPNCSQVLDKFLEDDLPDSPDALDLQNGTSDEQNVKRMRFCELKEDVRKAFSKDRADNSMFSILSSSSSSSPPPKVAKK.

Residues 97–191 (SDADVDVADG…LYTGKLRPAP (95 aa)) form the BTB domain. A compositionally biased stretch (gly residues) spans 138-152 (AAGGGGGGGGGGGER). Residues 138–157 (AAGGGGGGGGGGGERTGGRP) are disordered. Residues 194–208 (VVSCADPMCPHDSCP) form a C2HC NPR-type zinc finger. Residues C197, C202, H204, and C207 each coordinate Zn(2+). ANK repeat units follow at residues 317–347 (KRVRRIHRALDSDDVELVKLLLNESEITLDD), 349–376 (NALHYAAAYCDSKVVSELLDLRLANLNL), and 380–409 (RGYTALHLAAMRREPAIIMCLLNKGAAVSQ). Residues 439-576 (ESNKDRLCID…FLEDDLPDSP (138 aa)) form a salicylic acid-binding core (SBC) region. R484 contacts salicylate.

It belongs to the plant 'ANKYRIN-BTB/POZ' family. 'NPR1-like' subfamily. Interacts with NRR. Interacts with TGAL1 and TGAL11.

The protein localises to the nucleus. It participates in protein modification; protein ubiquitination. Functionally, salicylic acid (SA)-binding substrate-specific adapter of an E3 ubiquitin-protein ligase complex (CUL3-RBX1-BTB) which mediates the ubiquitination and subsequent proteasomal degradation of target proteins. May be involved in regulating basal defense responses against pathogens, and may be involved in crosstalk between SA- and JA-dependent signaling pathways. Does not seem to be involved in defense response against the bacterial blight disease caused by Xanthomonas oryzae pv. oryzae (Xoo). Over-expression of NPR2/NH2 does not confer disease resistance to Xoo. The chain is BTB/POZ domain and ankyrin repeat-containing protein NPR2 from Oryza sativa subsp. japonica (Rice).